Here is a 451-residue protein sequence, read N- to C-terminus: MAKKLFIQTHGCQMNEYDSSRMADLLGESHEMELTDNAEEADVLLLNTCSIREKAQDKVYHQLGRWKKLKQKNPNLVIGVGGCVASQEGDAIRKRAKHVDMIFGPQTLHKLPEMVNAAGKHIPITDVTFPEIEKFDHLPAPRVEGAEAFVSIMEGCSKYCTFCVVPYTRGEEVSRPFDSILKEVVQLAEQGVREIHLLGQNVNAYRGDTAEGDEADLADIIHAVAQIDGVERIRFTTSHPVEFSDSLIEAFRNEPKLVSHLHLPVQSGADNILSAMKRGHDRQYYIDKINRIKEARPGISLSSDFIIGFPGETDDDFVDTMNLIQEIGFDHSFSFVYSQRPGTPASNLEDDTPEDVKKERLAILQRRISQQAYDISLSMVGEVQRILISGYSPRDPGQLQGRTENNRIVNFRAFDPQLIGKFADVVITDAYPNSLLGELVGSELDSDFVLQ.

The 118-residue stretch at 3–120 (KKLFIQTHGC…LPEMVNAAGK (118 aa)) folds into the MTTase N-terminal domain. [4Fe-4S] cluster is bound by residues Cys12, Cys49, Cys83, Cys156, Cys160, and Cys163. The 233-residue stretch at 142-374 (RVEGAEAFVS…QRRISQQAYD (233 aa)) folds into the Radical SAM core domain. A TRAM domain is found at 377 to 441 (LSMVGEVQRI…PNSLLGELVG (65 aa)).

It belongs to the methylthiotransferase family. MiaB subfamily. As to quaternary structure, monomer. The cofactor is [4Fe-4S] cluster.

It is found in the cytoplasm. It catalyses the reaction N(6)-dimethylallyladenosine(37) in tRNA + (sulfur carrier)-SH + AH2 + 2 S-adenosyl-L-methionine = 2-methylsulfanyl-N(6)-dimethylallyladenosine(37) in tRNA + (sulfur carrier)-H + 5'-deoxyadenosine + L-methionine + A + S-adenosyl-L-homocysteine + 2 H(+). Catalyzes the methylthiolation of N6-(dimethylallyl)adenosine (i(6)A), leading to the formation of 2-methylthio-N6-(dimethylallyl)adenosine (ms(2)i(6)A) at position 37 in tRNAs that read codons beginning with uridine. The polypeptide is tRNA-2-methylthio-N(6)-dimethylallyladenosine synthase (Marinomonas sp. (strain MWYL1)).